The chain runs to 196 residues: ATP-dependent Clp protease proteolytic subunit (196 aa).

Residue serine 101 is the Nucleophile of the active site. Histidine 126 is an active-site residue.

The protein belongs to the peptidase S14 family. In terms of assembly, component of the chloroplastic Clp protease core complex.

Its subcellular location is the plastid. It localises to the chloroplast stroma. It catalyses the reaction Hydrolysis of proteins to small peptides in the presence of ATP and magnesium. alpha-casein is the usual test substrate. In the absence of ATP, only oligopeptides shorter than five residues are hydrolyzed (such as succinyl-Leu-Tyr-|-NHMec, and Leu-Tyr-Leu-|-Tyr-Trp, in which cleavage of the -Tyr-|-Leu- and -Tyr-|-Trp bonds also occurs).. In terms of biological role, cleaves peptides in various proteins in a process that requires ATP hydrolysis. Has a chymotrypsin-like activity. Plays a major role in the degradation of misfolded proteins. This is ATP-dependent Clp protease proteolytic subunit from Nicotiana tabacum (Common tobacco).